The sequence spans 380 residues: Protein phosphatase methylesterase 1 (380 aa).

The tract at residues 1–38 (MSALEKSMHLGRLPSRPPLPGSGGSQSGAKMRMGPGRK) is disordered. Position 15 is a phosphoserine (Ser-15). Residue Arg-16 is modified to Asymmetric dimethylarginine; alternate. Arg-16 carries the omega-N-methylarginine; alternate modification. A Phosphoserine modification is found at Ser-42. Catalysis depends on residues Ser-156 and Asp-181. Residues 255–265 (IEEEEEDEEGS) are compositionally biased toward acidic residues. The disordered stretch occupies residues 255-280 (IEEEEEDEEGSESVNKRKKEDDMETK). Positions 268-280 (VNKRKKEDDMETK) are enriched in basic and acidic residues. Residue His-349 is part of the active site.

Belongs to the AB hydrolase superfamily. Binds PPP2CA and PPP2CB. Phosphorylated by SIK1 following increases in intracellular sodium, leading to dissociation from the protein phosphatase 2A (PP2A) complex and subsequent dephosphorylation of sodium/potassium-transporting ATPase ATP1A1.

It carries out the reaction [phosphatase 2A protein]-C-terminal L-leucine methyl ester + H2O = [phosphatase 2A protein]-C-terminal L-leucine + methanol + H(+). Demethylates proteins that have been reversibly carboxymethylated. Demethylates PPP2CB (in vitro) and PPP2CA. Binding to PPP2CA displaces the manganese ion and inactivates the enzyme. The chain is Protein phosphatase methylesterase 1 (PPME1) from Bos taurus (Bovine).